The sequence spans 829 residues: Cap-specific mRNA (nucleoside-2'-O-)-methyltransferase 1 (829 aa).

A disordered region spans residues 1 to 68 (MKRAAQASDE…DSQNSQGSMA (68 aa)). Residues 2–16 (KRAAQASDEPLKKRK) carry the Bipartite nuclear localization signal motif. A compositionally biased stretch (low complexity) spans 31–44 (QRTTSQDSSQSESL). Polar residues predominate over residues 55 to 68 (SRPSDSQNSQGSMA). Residues 79–125 (YNNVSQKLMAKMGFREGEGLGKYGQGRKEIVEASTQRGRRGLGLMLK) enclose the G-patch domain. Substrate contacts are provided by residues 195 to 199 (KTVFD) and R210. A RrmJ-type SAM-dependent 2'-O-MTase domain is found at 223–442 (FFLNRAAMKM…ERYVVCKGLK (220 aa)). N226 lines the S-adenosyl-L-methionine pocket. Residue K231 is part of the active site. S-adenosyl-L-methionine-binding positions include 269–275 (CAGPGGF) and 327–328 (DI). D356 is an active-site residue. 366–368 (NLQ) contributes to the substrate binding site. K396 acts as the Proton acceptor in catalysis. N431 is a binding site for substrate. The WW domain occupies 745–779 (KTVNDPWTMAFSKSSKRKFFYNKQTKESTYDLPAT).

It is found in the nucleus. It catalyses the reaction a 5'-end (N(7)-methyl 5'-triphosphoguanosine)-ribonucleoside in mRNA + S-adenosyl-L-methionine = a 5'-end (N(7)-methyl 5'-triphosphoguanosine)-(2'-O-methyl-ribonucleoside) in mRNA + S-adenosyl-L-homocysteine + H(+). In terms of biological role, S-adenosyl-L-methionine-dependent methyltransferase that mediates mRNA cap1 2'-O-ribose methylation to the 5'-cap structure of mRNAs. Methylates the ribose of the first nucleotide of a m(7)GpppG-capped mRNA and small nuclear RNA (snRNA) to produce m(7)GpppRm (cap1). Displays a preference for cap0 transcripts. Cap1 modification is linked to higher levels of translation. May be involved in the interferon response pathway. The sequence is that of Cap-specific mRNA (nucleoside-2'-O-)-methyltransferase 1 (cmtr1) from Danio rerio (Zebrafish).